Consider the following 555-residue polypeptide: Heterochromatin protein 1-binding protein 3 (555 aa).

Ala-2 carries the N-acetylalanine modification. The residue at position 6 (Ser-6) is a Phosphoserine. A disordered region spans residues Lys-29–Pro-134. Thr-51 carries the phosphothreonine modification. Residues Thr-51–Pro-67 show a composition bias toward basic and acidic residues. Lys-64 is covalently cross-linked (Glycyl lysine isopeptide (Lys-Gly) (interchain with G-Cter in SUMO2)). At Thr-85 the chain carries Phosphothreonine. Lys-97 is covalently cross-linked (Glycyl lysine isopeptide (Lys-Gly) (interchain with G-Cter in SUMO2)). Positions Pro-100–Lys-127 are enriched in basic and acidic residues. Residues Ser-142, Ser-155, and Ser-156 each carry the phosphoserine modification. The H15 1 domain maps to Pro-157–Gln-232. Lys-190 is modified (N6-acetyllysine). The segment at Ser-227–Glu-254 is disordered. The segment covering Lys-233–Arg-247 has biased composition (basic residues). Phosphoserine is present on residues Ser-248 and Ser-249. H15 domains are found at residues Pro-255–Lys-330 and Leu-337–Phe-413. A Glycyl lysine isopeptide (Lys-Gly) (interchain with G-Cter in SUMO2) cross-link involves residue Lys-258. The tract at residues Leu-422–Lys-555 is disordered. The segment covering Asp-430–Glu-452 has biased composition (acidic residues). Residues Ser-443, Ser-444, and Ser-448 each carry the phosphoserine modification. Positions Gly-491–Arg-512 are enriched in basic residues. The span at Pro-513–Ser-532 shows a compositional bias: low complexity. Over residues Ser-545–Lys-555 the composition is skewed to basic residues.

As to quaternary structure, interacts (via PxVxL motif) with CBX5.

It localises to the nucleus. The protein resides in the chromosome. Its function is as follows. Component of heterochromatin that maintains heterochromatin integrity during G1/S progression and regulates the duration of G1 phase to critically influence cell proliferative capacity. May play a role in hypoxia-induced oncogenesis. The polypeptide is Heterochromatin protein 1-binding protein 3 (HP1BP3) (Bos taurus (Bovine)).